The following is a 622-amino-acid chain: MEGPGLGSQCRNHSHGPHPPGFGRYGICAHENKELANAREALPLIEDSSNCDIVKATQYGIFERCKELVEAGYDVRQPDKENVSLLHWAAINNRLDLVKFYISKGAVVDQLGGDLNSTPLHWAIRQGHLPMVILLLQHGADPTLIDGEGFSSIHLAVLFQHMPIIAYLISKGQSVNMTDVNGQTPLMLSAHKVIGPEPTGFLLKFNPSLNVVDKIHQNTPLHWAVAAGNVNAVDKLLEAGSSLDIQNVKGETPLDMALQNKNQLIIHMLKTEAKMRANQKFRLWRWLQKCELFLLLMLSVITMWAIGYILDFNSDSWLLKGCLLVTLFFLTSLFPRFLVGYKNLVYLPTAFLLSSVFWIFMTWFILFFPDLAGAPFYFSFIFSIVAFLYFFYKTWATDPGFTKASEEEKKVNIITLAETGSLDFRTFCTSCLIRKPLRSLHCHVCNCCVARYDQHCLWTGRCIGFGNHHYYIFFLFFLSMVCGWIIYGSFIYLSSHCATTFKEDGLWTYLNQIVACSPWVLYILMLATFHFSWSTFLLLNQLFQIAFLGLTSHERISLQKQSKHMKQTLSLRKTPYNLGFMQNLADFFQCGCFGLVKPCVVDWTSQYTMVFHPAREKVLRSV.

Met1 is modified (N-acetylmethionine). Topologically, residues 1–291 are cytoplasmic; that stretch reads MEGPGLGSQC…RLWRWLQKCE (291 aa). ANK repeat units lie at residues 43–78, 81–110, 115–144, 148–177, 181–211, 216–245, and 249–277; these read PLIEDSSNCDIVKATQYGIFERCKELVEAGYDVRQP, ENVSLLHWAAINNRLDLVKFYISKGAVVDQ, LNSTPLHWAIRQGHLPMVILLLQHGADPTL, EGFSSIHLAVLFQHMPIIAYLISKGQSVNM, NGQTPLMLSAHKVIGPEPTGFLLKFNPSLNV, HQNTPLHWAVAAGNVNAVDKLLEAGSSLDI, and KGETPLDMALQNKNQLIIHMLKTEAKMRA. Residues 292–312 form a helical membrane-spanning segment; it reads LFLLLMLSVITMWAIGYILDF. Residues 313–320 lie on the Lumenal side of the membrane; the sequence is NSDSWLLK. Residues 321–341 traverse the membrane as a helical segment; the sequence is GCLLVTLFFLTSLFPRFLVGY. Residues 342 to 347 are Cytoplasmic-facing; that stretch reads KNLVYL. The helical transmembrane segment at 348 to 368 threads the bilayer; that stretch reads PTAFLLSSVFWIFMTWFILFF. At 369 to 370 the chain is on the lumenal side; the sequence is PD. Residues 371–391 traverse the membrane as a helical segment; it reads LAGAPFYFSFIFSIVAFLYFF. The Cytoplasmic portion of the chain corresponds to 392–470; the sequence is YKTWATDPGF…RCIGFGNHHY (79 aa). One can recognise a DHHC domain in the interval 426–476; that stretch reads TFCTSCLIRKPLRSLHCHVCNCCVARYDQHCLWTGRCIGFGNHHYYIFFLF. Cys456 acts as the S-palmitoyl cysteine intermediate in catalysis. The helical transmembrane segment at 471-491 threads the bilayer; that stretch reads YIFFLFFLSMVCGWIIYGSFI. The Lumenal segment spans residues 492-518; sequence YLSSHCATTFKEDGLWTYLNQIVACSP. The helical transmembrane segment at 519 to 539 threads the bilayer; it reads WVLYILMLATFHFSWSTFLLL. The Cytoplasmic segment spans residues 540–622; sequence NQLFQIAFLG…PAREKVLRSV (83 aa).

It belongs to the DHHC palmitoyltransferase family. AKR/ZDHHC17 subfamily. Interacts (via ANK repeats) with CLIP3. Interacts (via ANK repeats) with DNAJC5 (via C-terminus). Interacts (via ANK repeats) with HTT. Interacts (via ANK repeats) with MAP6. Interacts (via ANK repeats) with SNAP23. Interacts (via ANK repeats) with SNAP25. May interact (via ANK repeats) with SPRED2.

It is found in the golgi apparatus membrane. The protein resides in the cytoplasmic vesicle membrane. It catalyses the reaction L-cysteinyl-[protein] + hexadecanoyl-CoA = S-hexadecanoyl-L-cysteinyl-[protein] + CoA. Its function is as follows. Palmitoyltransferase that could catalyze the addition of palmitate onto various protein substrates. Palmitoyltransferase for HTT and GAD2. May play a role in Mg(2+) transport. The polypeptide is Palmitoyltransferase ZDHHC13 (Homo sapiens (Human)).